Here is a 504-residue protein sequence, read N- to C-terminus: D-alanine--D-alanyl carrier protein ligase (504 aa).

Residue 152-153 (TS) participates in ATP binding. D-alanine is bound at residue Asp197. 292–297 (NTYGPT) serves as a coordination point for ATP. Val301 is a D-alanine binding site. ATP-binding positions include Asp383, 394–397 (YNGR), and Lys492. D-alanine is bound at residue Lys492.

Belongs to the ATP-dependent AMP-binding enzyme family. DltA subfamily.

It localises to the cytoplasm. It catalyses the reaction holo-[D-alanyl-carrier protein] + D-alanine + ATP = D-alanyl-[D-alanyl-carrier protein] + AMP + diphosphate. Its pathway is cell wall biogenesis; lipoteichoic acid biosynthesis. Catalyzes the first step in the D-alanylation of lipoteichoic acid (LTA), the activation of D-alanine and its transfer onto the D-alanyl carrier protein (Dcp) DltC. In an ATP-dependent two-step reaction, forms a high energy D-alanyl-AMP intermediate, followed by transfer of the D-alanyl residue as a thiol ester to the phosphopantheinyl prosthetic group of the Dcp. D-alanylation of LTA plays an important role in modulating the properties of the cell wall in Gram-positive bacteria, influencing the net charge of the cell wall. In Bacillus cereus (strain ATCC 10987 / NRS 248), this protein is D-alanine--D-alanyl carrier protein ligase.